A 488-amino-acid chain; its full sequence is Transcriptional coactivator YAP1 (488 aa).

Pro residues predominate over residues M1–V21. Positions M1 to E47 are disordered. Position 46 is a phosphoserine (S46). At T48 the chain carries Phosphothreonine. Positions M71 to E85 form a coiled coil. K75 carries the N6-lactoyllysine modification. Positions L76 to T99 are disordered. Phosphoserine occurs at positions 90 and 94. T95 is modified (phosphothreonine). A Phosphothreonine; by MAPK8 and MAPK9 modification is found at T104. Phosphoserine is present on residues S112, S113, S116, and S123. S149 carries the phosphoserine; by LATS1 and LATS2 modification. 2 consecutive WW domains span residues V156–K189 and G215–L248. Disordered regions lie at residues S261–L293 and T339–S393. S274 is subject to Phosphoserine. The transactivation domain stretch occupies residues Q276–L488. The stretch at G283 to G344 forms a coiled coil. Positions N348 to Y376 are enriched in polar residues. A Phosphoserine; by MAPK8 and MAPK9 modification is found at S352. 4 positions are modified to phosphoserine: S356, S366, S367, and S373. At S382 the chain carries Phosphoserine; by LATS1 and LATS2. Polar residues predominate over residues D384–S393. Phosphoserine; by CK1 is present on residues S385 and S388. Phosphotyrosine; by ABL1 is present on Y392. The residue at position 397 (T397) is a Phosphothreonine; by MAPK8 and MAPK9.

Belongs to the YAP1 family. In terms of assembly, part of a complex when phosphorylated that contains DSG3, PKP1, YAP1 and YWHAG; the complex is required for localization of DSG3 and YAP1 to the cell membrane in keratinocytes. Binds to the SH3 domain of the YES kinase. Binds to WBP1 and WBP2. Binds, in vitro, through the WW1 domain, to neural isoforms of ENAH that contain the PPSY motif. The phosphorylated form interacts with YWHAB. Interacts (via WW domains) with LATS1 (via PPxY motif 2). Interacts with LATS2. Interacts (via WW domain 1) with isoform JM-A of ERBB4 (via PPxY motif 2). Interacts with TEAD1, TEAD2 and TEAD3. Interacts with TP73 and HCK. Interacts with RUNX1. Interacts with TEAD4. Interacts (via WW domains) with PTPN14 (via PPxY motif 2); this interaction leads to the cytoplasmic sequestration of YAP1 and inhibits its transcriptional coactivator activity. Interacts (when phosphorylated at Ser-112) with SMAD2, SMAD3 and WWTR1. Interacts with PRRG2 (via cytoplasmic domain). Interacts (via WW domains) with PRRG4 (via cytoplasmic domain). Interacts (phosphorylated) with CLDN18; the interaction sequesters YAP1 away from the nucleus and thereby restricts transcription of YAP1 target genes. Interacts with SMAD1. Interacts with AMOT; the interaction facilitates translocation of YAP1 to the cytoplasm and tight junctions. Interacts with AMOTL2, the interaction is required for ubiquitination of AMOTL2 and localization of YAP1 to tight junctions. In terms of processing, phosphorylated by LATS1 and LATS2; leading to cytoplasmic translocation and inactivation. Phosphorylated by ABL1; leading to YAP1 stabilization, enhanced interaction with TP73 and recruitment onto proapoptotic genes; in response to DNA damage. Phosphorylation at Ser-385 and Ser-388 by CK1 is triggered by previous phosphorylation at Ser-382 by LATS proteins and leads to YAP1 ubiquitination by SCF(beta-TRCP) E3 ubiquitin ligase and subsequent degradation. Phosphorylated at Thr-104, Ser-123, Ser-352 and Thr-397 by MAPK8/JNK1 and MAPK9/JNK2, which is required for the regulation of apoptosis by YAP1. Lactylation by AARS1 promotes nuclear localization and stabilization of YAP1, leading to increased Hippo signaling pathway. Delactylated by SIRT1. Post-translationally, ubiquitinated by SCF(beta-TRCP) E3 ubiquitin ligase. As to expression, isoforms lacking the transactivation domain seen in striatal neurons (at protein level). Ubiquitous. Isoform 2 is expressed at higher levels in the neural tissues. In the embryo, it is expressed in brain, eye, and the maxillary and frontonasal components of the primary palate.

It localises to the cytoplasm. It is found in the nucleus. Its subcellular location is the cell junction. The protein resides in the tight junction. The protein localises to the cell membrane. Functionally, transcriptional regulator with dual roles as a coactivator and corepressor. Critical downstream regulatory target in the Hippo signaling pathway, crucial for organ size control and tumor suppression by restricting proliferation and promoting apoptosis. The Hippo signaling pathway core involves a kinase cascade featuring STK3/MST2 and STK4/MST1, along with its regulatory partner SAV1, which phosphorylates and activates LATS1/2 in complex with their regulatory protein, MOB1. This activation leads to the phosphorylation and inactivation of the YAP1 oncoprotein and WWTR1/TAZ. Phosphorylation of YAP1 by LATS1/2 prevents its nuclear translocation, thereby regulating the expression of its target genes. The transcriptional regulation of gene expression requires TEAD transcription factors and modulates cell growth, anchorage-independent growth, and induction of epithelial-mesenchymal transition (EMT). Plays a key role in tissue tension and 3D tissue shape by regulating the cortical actomyosin network, acting via ARHGAP18, a Rho GTPase activating protein that suppresses F-actin polymerization. It also suppresses ciliogenesis by acting as a transcriptional corepressor of TEAD4 target genes AURKA and PLK1. In conjunction with WWTR1, regulates TGFB1-dependent SMAD2 and SMAD3 nuclear accumulation. Synergizes with WBP2 to enhance PGR activity. The polypeptide is Transcriptional coactivator YAP1 (Yap1) (Mus musculus (Mouse)).